A 72-amino-acid chain; its full sequence is Putative D-serine transporter DsdX-like protein (72 aa).

The polypeptide is Putative D-serine transporter DsdX-like protein (dsdX) (Escherichia coli O157:H7).